The following is a 208-amino-acid chain: Protein-L-isoaspartate O-methyltransferase (208 aa).

Ser-59 is an active-site residue.

It belongs to the methyltransferase superfamily. L-isoaspartyl/D-aspartyl protein methyltransferase family.

It localises to the cytoplasm. It catalyses the reaction [protein]-L-isoaspartate + S-adenosyl-L-methionine = [protein]-L-isoaspartate alpha-methyl ester + S-adenosyl-L-homocysteine. Catalyzes the methyl esterification of L-isoaspartyl residues in peptides and proteins that result from spontaneous decomposition of normal L-aspartyl and L-asparaginyl residues. It plays a role in the repair and/or degradation of damaged proteins. This Vibrio cholerae serotype O1 (strain ATCC 39541 / Classical Ogawa 395 / O395) protein is Protein-L-isoaspartate O-methyltransferase.